The sequence spans 63 residues: Large ribosomal subunit protein uL30 (63 aa).

Belongs to the universal ribosomal protein uL30 family. As to quaternary structure, part of the 50S ribosomal subunit.

In Methylobacterium sp. (strain 4-46), this protein is Large ribosomal subunit protein uL30.